Reading from the N-terminus, the 287-residue chain is Elongation factor Ts (287 aa).

An involved in Mg(2+) ion dislocation from EF-Tu region spans residues T77–V80.

This sequence belongs to the EF-Ts family.

Its subcellular location is the cytoplasm. Associates with the EF-Tu.GDP complex and induces the exchange of GDP to GTP. It remains bound to the aminoacyl-tRNA.EF-Tu.GTP complex up to the GTP hydrolysis stage on the ribosome. In Wolbachia sp. subsp. Brugia malayi (strain TRS), this protein is Elongation factor Ts.